The sequence spans 95 residues: Cell division topological specificity factor (95 aa).

It belongs to the MinE family.

Functionally, prevents the cell division inhibition by proteins MinC and MinD at internal division sites while permitting inhibition at polar sites. This ensures cell division at the proper site by restricting the formation of a division septum at the midpoint of the long axis of the cell. The polypeptide is Cell division topological specificity factor (Psychrobacter cryohalolentis (strain ATCC BAA-1226 / DSM 17306 / VKM B-2378 / K5)).